We begin with the raw amino-acid sequence, 379 residues long: uncharacterized protein (379 aa).

Disordered regions lie at residues 1–37 (MSSIQGKGTAGPSPEGIPNSREDGEMNPEGVTISGQT), 130–150 (VRYSSGRHGMDRNKSSSLSPE), and 332–379 (NPPI…RGSR).

It belongs to the chlamydial CPn_0499/CT_392/TC_0671 family.

This is an uncharacterized protein from Chlamydia muridarum (strain MoPn / Nigg).